The chain runs to 96 residues: (4S)-4-hydroxy-5-phosphonooxypentane-2,3-dione isomerase (96 aa).

Positions 2-91 constitute an ABM domain; the sequence is HVTLVEINVK…MTGPRKKTTF (90 aa).

The protein belongs to the LsrG family. In terms of assembly, homodimer.

It localises to the cytoplasm. The enzyme catalyses (2S)-2-hydroxy-3,4-dioxopentyl phosphate = 3-hydroxy-2,4-dioxopentyl phosphate. In terms of biological role, involved in the degradation of phospho-AI-2, thereby terminating induction of the lsr operon and closing the AI-2 signaling cycle. Catalyzes the conversion of (4S)-4-hydroxy-5-phosphonooxypentane-2,3-dione (P-DPD) to 3-hydroxy-5-phosphonooxypentane-2,4-dione (P-HPD). The chain is (4S)-4-hydroxy-5-phosphonooxypentane-2,3-dione isomerase from Yersinia enterocolitica serotype O:8 / biotype 1B (strain NCTC 13174 / 8081).